The following is a 92-amino-acid chain: Large ribosomal subunit protein bL34m (92 aa).

The transit peptide at 1–46 (MAVLAGSLLGPTSRSAALLGGRWLQPRAWLGFPDAWGLPTPQQARG) directs the protein to the mitochondrion. The residue at position 71 (serine 71) is a Phosphoserine.

It belongs to the bacterial ribosomal protein bL34 family. In terms of assembly, component of the mitochondrial large ribosomal subunit (mt-LSU). Mature mammalian 55S mitochondrial ribosomes consist of a small (28S) and a large (39S) subunit. The 28S small subunit contains a 12S ribosomal RNA (12S mt-rRNA) and 30 different proteins. The 39S large subunit contains a 16S rRNA (16S mt-rRNA), a copy of mitochondrial valine transfer RNA (mt-tRNA(Val)), which plays an integral structural role, and 52 different proteins.

The protein resides in the mitochondrion. The sequence is that of Large ribosomal subunit protein bL34m (MRPL34) from Homo sapiens (Human).